A 28-amino-acid polypeptide reads, in one-letter code: Putative GDSL-motif lipase/hydrolase-like protein (28 aa).

Belongs to the 'GDSL' lipolytic enzyme family.

The sequence is that of Putative GDSL-motif lipase/hydrolase-like protein from Populus euphratica (Euphrates poplar).